We begin with the raw amino-acid sequence, 103 residues long: uncharacterized protein (103 aa).

The segment covering 1–10 has biased composition (basic residues); it reads MVVKKSKPKN. Disordered stretches follow at residues 1 to 38 and 77 to 103; these read MVVK…KGKK and AVFS…NEKK.

This is an uncharacterized protein from Schizosaccharomyces pombe (strain 972 / ATCC 24843) (Fission yeast).